The primary structure comprises 235 residues: Probable deoxycytidine kinase FPV151 (235 aa).

Residue 30-38 participates in ATP binding; sequence GNISAGKST. The substrate site is built by Glu53, Tyr68, and Gln79. The Proton acceptor role is filled by Glu104. Residues Arg105, Asp110, and Glu172 each contribute to the substrate site.

This sequence belongs to the DCK/DGK family.

The catalysed reaction is 2'-deoxycytidine + a ribonucleoside 5'-triphosphate = dCMP + a ribonucleoside 5'-diphosphate + H(+). This chain is Probable deoxycytidine kinase FPV151, found in Vertebrata (FPV).